We begin with the raw amino-acid sequence, 99 residues long: Goannatyrotoxin-Vere1 (99 aa).

Positions 1–28 are cleaved as a signal peptide; the sequence is MIASMKPWPLVMVAALCILFCLGTLVDA. Tyr64 carries the tyrosine amide modification. Residues 68 to 99 constitute a propeptide, C-terminal extension; the sequence is SSPETLMSELIFGENSNSDHSSRSRFDDSYMW.

This sequence belongs to the NPY family. Expressed by the mandibular venom gland.

The protein localises to the secreted. Functionally, shows a potent unique triphasic action, rapid biphasic hypertension followed by prolonged hypotension. The chain is Goannatyrotoxin-Vere1 from Varanus eremius (Rusty desert monitor).